The primary structure comprises 143 residues: Large ribosomal subunit protein uL11 (143 aa).

The protein belongs to the universal ribosomal protein uL11 family. As to quaternary structure, part of the ribosomal stalk of the 50S ribosomal subunit. Interacts with L10 and the large rRNA to form the base of the stalk. L10 forms an elongated spine to which L12 dimers bind in a sequential fashion forming a multimeric L10(L12)X complex. In terms of processing, one or more lysine residues are methylated.

Functionally, forms part of the ribosomal stalk which helps the ribosome interact with GTP-bound translation factors. The protein is Large ribosomal subunit protein uL11 of Phenylobacterium zucineum (strain HLK1).